Here is a 483-residue protein sequence, read N- to C-terminus: V-type proton ATPase subunit H (483 aa).

S483 is subject to Phosphoserine.

This sequence belongs to the V-ATPase H subunit family. V-ATPase is a heteromultimeric enzyme made up of two complexes: the ATP-hydrolytic V1 complex and the proton translocation V0 complex. The V1 complex consists of three catalytic AB heterodimers that form a heterohexamer, three peripheral stalks each consisting of EG heterodimers, one central rotor including subunits D and F, and the regulatory subunits C and H. The proton translocation complex V0 consists of the proton transport subunit a, a ring of proteolipid subunits c9c'', rotary subunit d, subunits e and f, and the accessory subunits ATP6AP1/Ac45 and ATP6AP2/PRR. Interacts with AP2M1.

The protein resides in the cytoplasmic vesicle. The protein localises to the clathrin-coated vesicle membrane. In terms of biological role, subunit of the V1 complex of vacuolar(H+)-ATPase (V-ATPase), a multisubunit enzyme composed of a peripheral complex (V1) that hydrolyzes ATP and a membrane integral complex (V0) that translocates protons. V-ATPase is responsible for acidifying and maintaining the pH of intracellular compartments and in some cell types, is targeted to the plasma membrane, where it is responsible for acidifying the extracellular environment. Subunit H is essential for V-ATPase activity, but not for the assembly of the complex. Involved in the endocytosis mediated by clathrin-coated pits, required for the formation of endosomes. This Sus scrofa (Pig) protein is V-type proton ATPase subunit H (ATP6V1H).